Consider the following 120-residue polypeptide: Small cysteine and glycine repeat-containing protein 2 (120 aa).

Residues 4-104 are 19 X 2 AA repeats of CG; sequence CGCGGCGGCG…TCHSCGCGCG (101 aa).

The protein belongs to the KRTAP type 28 family.

In terms of biological role, in the hair cortex, hair keratin intermediate filaments are embedded in an interfilamentous matrix, consisting of hair keratin-associated proteins (KRTAP), which are essential for the formation of a rigid and resistant hair shaft through their extensive disulfide bond cross-linking with abundant cysteine residues of hair keratins. The matrix proteins include the high-sulfur and high-glycine-tyrosine keratins. The polypeptide is Small cysteine and glycine repeat-containing protein 2 (Homo sapiens (Human)).